We begin with the raw amino-acid sequence, 398 residues long: LIM domain-binding protein 2 (398 aa).

Disordered stretches follow at residues 245-280 (PPAEPTRQTTTKRRKRKNSTNNASNSNAGNNATSAY) and 354-398 (DAAN…QASQ). Over residues 263 to 279 (STNNASNSNAGNNATSA) the composition is skewed to low complexity. One can recognise an LIM interaction domain (LID) domain in the interval 323–362 (DVMVVGEPTLMGGEFGDEDERLITRLENTQYDAANGMDDE).

Belongs to the LDB family. As to expression, expressed in adult brain, lung, spleen and kidney. Isoform b is generally expressed at a higher level than isoform a.

It is found in the nucleus. In terms of biological role, binds to the LIM domain of a wide variety of LIM domain-containing transcription factors. This chain is LIM domain-binding protein 2, found in Xenopus laevis (African clawed frog).